The chain runs to 274 residues: N-acetylmuramic acid 6-phosphate etherase (274 aa).

The SIS domain maps to 54 to 217 (IIPRIDSGGR…STSVMIKLGR (164 aa)). Residue Glu82 is the Proton donor of the active site. Residue Glu113 is part of the active site.

This sequence belongs to the GCKR-like family. MurNAc-6-P etherase subfamily. Homodimer.

The enzyme catalyses N-acetyl-D-muramate 6-phosphate + H2O = N-acetyl-D-glucosamine 6-phosphate + (R)-lactate. It functions in the pathway amino-sugar metabolism; N-acetylmuramate degradation. In terms of biological role, specifically catalyzes the cleavage of the D-lactyl ether substituent of MurNAc 6-phosphate, producing GlcNAc 6-phosphate and D-lactate. In Christiangramia forsetii (strain DSM 17595 / CGMCC 1.15422 / KT0803) (Gramella forsetii), this protein is N-acetylmuramic acid 6-phosphate etherase.